A 519-amino-acid polypeptide reads, in one-letter code: Ribonuclease Y 1 (519 aa).

A helical transmembrane segment spans residues 3-23 (VPIVILAIIAIVVGVVGGYYL). The segment covering 92 to 120 (QREETLDRKDNSLEKRENSLNRRDKKLSA) has biased composition (basic and acidic residues). The tract at residues 92 to 124 (QREETLDRKDNSLEKRENSLNRRDKKLSAEEQN) is disordered. Positions 209-272 (TITVVTLPND…EVAKIALEKL (64 aa)) constitute a KH domain. In terms of domain architecture, HD spans 335–428 (ALAHSIEVAK…VSTADIISAT (94 aa)).

Belongs to the RNase Y family.

It localises to the cell membrane. In terms of biological role, endoribonuclease that initiates mRNA decay. The chain is Ribonuclease Y 1 from Levilactobacillus brevis (strain ATCC 367 / BCRC 12310 / CIP 105137 / JCM 1170 / LMG 11437 / NCIMB 947 / NCTC 947) (Lactobacillus brevis).